We begin with the raw amino-acid sequence, 460 residues long: ATP synthase subunit beta 1 (460 aa).

149 to 156 (GGAGVGKT) lines the ATP pocket.

It belongs to the ATPase alpha/beta chains family. F-type ATPases have 2 components, CF(1) - the catalytic core - and CF(0) - the membrane proton channel. CF(1) has five subunits: alpha(3), beta(3), gamma(1), delta(1), epsilon(1). CF(0) has three main subunits: a(1), b(2) and c(9-12). The alpha and beta chains form an alternating ring which encloses part of the gamma chain. CF(1) is attached to CF(0) by a central stalk formed by the gamma and epsilon chains, while a peripheral stalk is formed by the delta and b chains.

It is found in the cell inner membrane. It catalyses the reaction ATP + H2O + 4 H(+)(in) = ADP + phosphate + 5 H(+)(out). Functionally, produces ATP from ADP in the presence of a proton gradient across the membrane. The catalytic sites are hosted primarily by the beta subunits. The chain is ATP synthase subunit beta 1 from Nitrosomonas eutropha (strain DSM 101675 / C91 / Nm57).